The primary structure comprises 244 residues: High frequency lysogenization protein HflD homolog (244 aa).

This sequence belongs to the HflD family.

It is found in the cytoplasm. The protein localises to the cell inner membrane. The protein is High frequency lysogenization protein HflD homolog of Acinetobacter baumannii (strain SDF).